Consider the following 577-residue polypeptide: Putative laccase-1 (577 aa).

Residues 1–28 form the signal peptide; that stretch reads MGTAKIPALLWFLLAGLVLALAVNPAHG. Plastocyanin-like domains are found at residues 37 to 153 and 163 to 316; these read FITE…PKRG and KEIP…YTDS. 2 N-linked (GlcNAc...) asparagine glycosylation sites follow: asparagine 42 and asparagine 83. Cu cation-binding residues include histidine 87 and histidine 89. The N-linked (GlcNAc...) asparagine glycan is linked to asparagine 115. Residues histidine 132 and histidine 134 each contribute to the Cu cation site. N-linked (GlcNAc...) asparagine glycosylation is found at asparagine 276, asparagine 304, asparagine 382, and asparagine 402. The region spanning 442–561 is the Plastocyanin-like 3 domain; it reads DINGGGPLLT…DTMFIVKDGK (120 aa). Cu cation is bound by residues histidine 478, histidine 481, histidine 483, histidine 540, cysteine 541, histidine 542, histidine 546, and methionine 551.

The protein belongs to the multicopper oxidase family. Cu cation serves as cofactor.

The protein localises to the secreted. It localises to the extracellular space. The protein resides in the apoplast. It catalyses the reaction 4 hydroquinone + O2 = 4 benzosemiquinone + 2 H2O. Lignin degradation and detoxification of lignin-derived products. This Oryza sativa subsp. japonica (Rice) protein is Putative laccase-1 (LAC1).